Consider the following 433-residue polypeptide: ATP-dependent RNA helicase SUB2 (433 aa).

Residues 1–17 (MSAENQEELLDYSDSEE) show a composition bias toward acidic residues. Residues 1 to 39 (MSAENQEELLDYSDSEEIAVPTTTQAGEGESANDKEADK) form a disordered region. Positions 49 to 77 (TGFRDFLLKPELLRAIGDCGFEHPSEVQQ) match the Q motif motif. The Helicase ATP-binding domain maps to 80–255 (IPQSILGTDV…KKFMQNPLEI (176 aa)). Residue 93-100 (AKSGLGKT) coordinates ATP. The DEAD box motif lies at 202-205 (DECD). In terms of domain architecture, Helicase C-terminal spans 267–428 (GLQQYYIKLE…EFPEEGVDPS (162 aa)).

Belongs to the DEAD box helicase family. DECD subfamily.

The protein localises to the nucleus. The catalysed reaction is ATP + H2O = ADP + phosphate + H(+). ATP-binding RNA helicase involved in transcription elongation and required for the export of mRNA out of the nucleus. SUB2 also plays a role in pre-mRNA splicing and spliceosome assembly. May be involved in rDNA and telomeric silencing, and maintenance of genome integrity. The chain is ATP-dependent RNA helicase SUB2 (SUB2) from Lodderomyces elongisporus (strain ATCC 11503 / CBS 2605 / JCM 1781 / NBRC 1676 / NRRL YB-4239) (Yeast).